We begin with the raw amino-acid sequence, 466 residues long: Purple acid phosphatase 25 (466 aa).

A signal peptide spans 1-21; it reads MRMNKILLVFVFLSIATVINS. Aspartate 164 lines the Fe cation pocket. An N-linked (GlcNAc...) asparagine glycan is attached at asparagine 172. Fe cation is bound by residues aspartate 192 and tyrosine 195. Aspartate 192 is a binding site for Zn(2+). The Zn(2+) site is built by asparagine 229 and histidine 314. Asparagine 229 provides a ligand contact to substrate. Histidine 324 acts as the Proton donor in catalysis. Histidine 351 contributes to the Zn(2+) binding site. A substrate-binding site is contributed by 351-353; it reads HVH. Fe cation is bound at residue histidine 353. Asparagine 367 and asparagine 424 each carry an N-linked (GlcNAc...) asparagine glycan.

It belongs to the metallophosphoesterase superfamily. Purple acid phosphatase family. As to quaternary structure, homodimer. Requires Fe cation as cofactor. Zn(2+) serves as cofactor. In terms of tissue distribution, specifically expressed in flowers.

It is found in the secreted. The enzyme catalyses a phosphate monoester + H2O = an alcohol + phosphate. The protein is Purple acid phosphatase 25 (PAP25) of Arabidopsis thaliana (Mouse-ear cress).